Here is a 416-residue protein sequence, read N- to C-terminus: Gamma-glutamyl phosphate reductase (416 aa).

Belongs to the gamma-glutamyl phosphate reductase family.

It is found in the cytoplasm. The catalysed reaction is L-glutamate 5-semialdehyde + phosphate + NADP(+) = L-glutamyl 5-phosphate + NADPH + H(+). It participates in amino-acid biosynthesis; L-proline biosynthesis; L-glutamate 5-semialdehyde from L-glutamate: step 2/2. Its function is as follows. Catalyzes the NADPH-dependent reduction of L-glutamate 5-phosphate into L-glutamate 5-semialdehyde and phosphate. The product spontaneously undergoes cyclization to form 1-pyrroline-5-carboxylate. The protein is Gamma-glutamyl phosphate reductase of Streptococcus thermophilus.